We begin with the raw amino-acid sequence, 222 residues long: V-type ATP synthase subunit D (222 aa).

It belongs to the V-ATPase D subunit family.

In terms of biological role, produces ATP from ADP in the presence of a proton gradient across the membrane. In Acetivibrio thermocellus (strain ATCC 27405 / DSM 1237 / JCM 9322 / NBRC 103400 / NCIMB 10682 / NRRL B-4536 / VPI 7372) (Clostridium thermocellum), this protein is V-type ATP synthase subunit D.